Reading from the N-terminus, the 517-residue chain is Serine hydroxymethyltransferase 2, mitochondrial (517 aa).

The transit peptide at Met1–Met29 directs the protein to the mitochondrion. Ser82 is a binding site for L-serine. Residues Ser82, Tyr102, Glu104, Tyr112, Ser148–Ser150, and His177 each bind pemetrexed. L-serine is bound by residues Glu104 and Tyr112. Methotrexate is bound at residue Glu104. Thr184 to Thr186 provides a ligand contact to methotrexate. 2 residues coordinate pemetrexed: Ser232 and His260. Residues His260 and Lys286 each contribute to the L-serine site. At Lys286 the chain carries N6-(pyridoxal phosphate)lysine. Gly331 contributes to the pemetrexed binding site. Lys414 is a binding site for methotrexate. Residue Arg430 coordinates L-serine. Arg430 contributes to the pemetrexed binding site.

Belongs to the SHMT family. In terms of assembly, homotetramer. Pyridoxal 5'-phosphate serves as cofactor. As to expression, ubiquitous. Mainly expressed in the shoot apical meristem and roots. Also detected in the leaf vasculature, especially in the protoxylem and adjacent cell layers.

Its subcellular location is the mitochondrion. The enzyme catalyses (6R)-5,10-methylene-5,6,7,8-tetrahydrofolate + glycine + H2O = (6S)-5,6,7,8-tetrahydrofolate + L-serine. Its pathway is one-carbon metabolism; tetrahydrofolate interconversion. With respect to regulation, inhibited by the antifolate drugs methotrexate and pemetrexed. Functionally, functions outside the photorespiratory pathway in catalyzing the interconversion of serine and glycine with the conversion of tetrahydrofolate (THF) into 5,10-methylene-THF. This Arabidopsis thaliana (Mouse-ear cress) protein is Serine hydroxymethyltransferase 2, mitochondrial.